The following is a 197-amino-acid chain: Cytochrome c-L (197 aa).

The signal sequence occupies residues M1–A25. The heme c site is built by C90, C93, and H94.

Post-translationally, binds 1 heme c group covalently per subunit.

The protein localises to the periplasm. Functionally, electron acceptor for MDH. Acts in methanol oxidation. The chain is Cytochrome c-L (moxG) from Methylorubrum extorquens (strain ATCC 14718 / DSM 1338 / JCM 2805 / NCIMB 9133 / AM1) (Methylobacterium extorquens).